A 568-amino-acid polypeptide reads, in one-letter code: Small ribosomal subunit protein bS1 (568 aa).

6 S1 motif domains span residues 39-100 (KTVV…LSRE), 118-184 (GEFV…VSRR), 205-273 (GMIL…LGIK), 290-360 (GKKM…LSIK), 377-447 (GTII…LGIK), and 464-533 (GTIV…LSVK).

The protein belongs to the bacterial ribosomal protein bS1 family.

Functionally, binds mRNA; thus facilitating recognition of the initiation point. It is needed to translate mRNA with a short Shine-Dalgarno (SD) purine-rich sequence. This Rickettsia typhi (strain ATCC VR-144 / Wilmington) protein is Small ribosomal subunit protein bS1 (rpsA).